The chain runs to 182 residues: MNYIPELKKYYKDSVIKELVKEFEYKSIMQVPKLEKIVVSVGVGEAVRNKKLLDSAVLELSQITGQKAVKTKAKKAIAGFKIRQGQEIGAKVTLRGNAMYEFLYKLIHLALPRVKDFRGINGNAFDGNGNYSFGITEQIIFSEIDYDKIERISGLNVTIVTTASNDKESKALLLKFGMPFSN.

It belongs to the universal ribosomal protein uL5 family. Part of the 50S ribosomal subunit; part of the 5S rRNA/L5/L18/L25 subcomplex. Contacts the 5S rRNA and the P site tRNA. Forms a bridge to the 30S subunit in the 70S ribosome.

Its function is as follows. This is one of the proteins that bind and probably mediate the attachment of the 5S RNA into the large ribosomal subunit, where it forms part of the central protuberance. In the 70S ribosome it contacts protein S13 of the 30S subunit (bridge B1b), connecting the 2 subunits; this bridge is implicated in subunit movement. Contacts the P site tRNA; the 5S rRNA and some of its associated proteins might help stabilize positioning of ribosome-bound tRNAs. This Borrelia garinii subsp. bavariensis (strain ATCC BAA-2496 / DSM 23469 / PBi) (Borreliella bavariensis) protein is Large ribosomal subunit protein uL5.